Consider the following 499-residue polypeptide: Xylulose kinase (499 aa).

Position 81 to 82 (81 to 82) interacts with substrate; it reads MH. The active-site Proton acceptor is aspartate 239.

It belongs to the FGGY kinase family.

The enzyme catalyses D-xylulose + ATP = D-xylulose 5-phosphate + ADP + H(+). In terms of biological role, catalyzes the phosphorylation of D-xylulose to D-xylulose 5-phosphate. The chain is Xylulose kinase from Bacillus subtilis (strain 168).